Consider the following 452-residue polypeptide: MAVQALPEINKLSVSEEGAANAAAKGQAAQGTAGNDDAENDESDEDKEDEQEVADGAAAAGGKKKKKKTKKKKKKGTAKVQSDPPRVPLSTLFPNNNYPEGEIVEYKDDNAYRTTNEEKRYLDRMNNDFLTDYRKSAEIHRQVRQYAQKELLKPGRSLTEIAEGIEDSVRALTGHMGLEEGDSLVAGMGFPTGLNINHCAAHYSPNAGNKMVLQYGDVMKVDFGVHVNGRIVDSAFTVAFDPVYDNLLNAVKDATNTGIREAGIDVRMSDIGAAIQETMESYEVEINGTIYPVKAIRNLNGHTIGHYLIHGGSTGKSVPIVKGGDQTKMEEGETYAIETFGSTGKGFVRDDMEVSHYAKVPDAPNVPLRLSSAKNLLNVITKNFGTLPFCRRYLDRLGQEKYLLGLNNLVSSGLVDAYPPLVDVKGSYTAQFEHTILLRPNVKEVITRGDDY.

Residues 1–96 (MAVQALPEIN…VPLSTLFPNN (96 aa)) form a disordered region. Low complexity predominate over residues 18–35 (GAANAAAKGQAAQGTAGN). Residues 36–53 (DDAENDESDEDKEDEQEV) are compositionally biased toward acidic residues. Residues 62-77 (GKKKKKKTKKKKKKGT) show a composition bias toward basic residues. Histidine 202 provides a ligand contact to substrate. Positions 222, 233, and 302 each coordinate a divalent metal cation. Residue histidine 310 participates in substrate binding. The a divalent metal cation site is built by glutamate 338 and glutamate 433.

It belongs to the peptidase M24A family. Methionine aminopeptidase eukaryotic type 2 subfamily. The cofactor is Co(2+). Zn(2+) is required as a cofactor. Mn(2+) serves as cofactor. Requires Fe(2+) as cofactor.

Its subcellular location is the cytoplasm. The enzyme catalyses Release of N-terminal amino acids, preferentially methionine, from peptides and arylamides.. Its function is as follows. Cotranslationally removes the N-terminal methionine from nascent proteins. The N-terminal methionine is often cleaved when the second residue in the primary sequence is small and uncharged (Met-Ala-, Cys, Gly, Pro, Ser, Thr, or Val). This is Methionine aminopeptidase 2 from Coccidioides posadasii (strain C735) (Valley fever fungus).